The chain runs to 444 residues: NADH-quinone oxidoreductase subunit F (444 aa).

62–71 (GRGGAGFLTG) lines the NAD(+) pocket. 177–224 (GAGRYICGEETALINSLEGRRANPRFKPPFPAYVGLWGKPTCVNNVET) provides a ligand contact to FMN. Positions 354, 357, 360, and 401 each coordinate [4Fe-4S] cluster.

The protein belongs to the complex I 51 kDa subunit family. As to quaternary structure, composed of 13 different subunits. Subunits NuoCD, E, F, and G constitute the peripheral sector of the complex. It depends on [4Fe-4S] cluster as a cofactor. The cofactor is FMN.

The catalysed reaction is a quinone + NADH + 5 H(+)(in) = a quinol + NAD(+) + 4 H(+)(out). In terms of biological role, NDH-1 shuttles electrons from NADH, via FMN and iron-sulfur (Fe-S) centers, to quinones in the respiratory chain. Couples the redox reaction to proton translocation (for every two electrons transferred, four hydrogen ions are translocated across the cytoplasmic membrane), and thus conserves the redox energy in a proton gradient. This chain is NADH-quinone oxidoreductase subunit F (nuoF), found in Buchnera aphidicola subsp. Baizongia pistaciae (strain Bp).